The following is a 226-amino-acid chain: ATP synthase subunit a (226 aa).

5 helical membrane passes run 20-40 (LNWLSTFLGLLLIPFSFWLLP), 74-94 (FISLFSLIMFNNFLGLFPYIF), 100-120 (LTLTLALAFPLWLSFMLYGWI), 158-180 (LAVRLTANMIAGHLLLTLLGNTG), and 197-217 (IALLVLESAVAIIQSYVFAVL).

It belongs to the ATPase A chain family. As to quaternary structure, F-type ATPases have 2 components, CF(1) - the catalytic core - and CF(0) - the membrane proton channel. CF(1) has five subunits: alpha(3), beta(3), gamma(1), delta(1), epsilon(1). CF(0) has three main subunits: a, b and c.

It is found in the mitochondrion inner membrane. Functionally, mitochondrial membrane ATP synthase (F(1)F(0) ATP synthase or Complex V) produces ATP from ADP in the presence of a proton gradient across the membrane which is generated by electron transport complexes of the respiratory chain. F-type ATPases consist of two structural domains, F(1) - containing the extramembraneous catalytic core and F(0) - containing the membrane proton channel, linked together by a central stalk and a peripheral stalk. During catalysis, ATP synthesis in the catalytic domain of F(1) is coupled via a rotary mechanism of the central stalk subunits to proton translocation. Key component of the proton channel; it may play a direct role in the translocation of protons across the membrane. The chain is ATP synthase subunit a (ATP6) from Anopheles quadrimaculatus (Common malaria mosquito).